A 300-amino-acid chain; its full sequence is UDP-N-acetylenolpyruvoylglucosamine reductase (300 aa).

One can recognise an FAD-binding PCMH-type domain in the interval K28–G193. R172 is a catalytic residue. S222 (proton donor) is an active-site residue. E292 is a catalytic residue.

Belongs to the MurB family. The cofactor is FAD.

It localises to the cytoplasm. The catalysed reaction is UDP-N-acetyl-alpha-D-muramate + NADP(+) = UDP-N-acetyl-3-O-(1-carboxyvinyl)-alpha-D-glucosamine + NADPH + H(+). Its pathway is cell wall biogenesis; peptidoglycan biosynthesis. Cell wall formation. This chain is UDP-N-acetylenolpyruvoylglucosamine reductase, found in Limosilactobacillus fermentum (strain NBRC 3956 / LMG 18251) (Lactobacillus fermentum).